A 359-amino-acid polypeptide reads, in one-letter code: GDSL esterase/lipase At5g03610 (359 aa).

The signal sequence occupies residues 1–22; the sequence is MDSLIKLFFCLFIFLCTSLLFG. Ser50 functions as the Nucleophile in the catalytic mechanism. Residues Asn136, Asn236, and Asn259 are each glycosylated (N-linked (GlcNAc...) asparagine). Catalysis depends on residues Asp332 and His335.

Belongs to the 'GDSL' lipolytic enzyme family.

It is found in the secreted. This is GDSL esterase/lipase At5g03610 from Arabidopsis thaliana (Mouse-ear cress).